Here is a 428-residue protein sequence, read N- to C-terminus: Adenosylhomocysteinase (428 aa).

Residues Thr-62, Asp-134, and Glu-159 each coordinate substrate. 160–162 (TTT) lines the NAD(+) pocket. The substrate site is built by Lys-189 and Asp-193. NAD(+) is bound by residues Asn-194, 223–228 (GYGWCG), Glu-246, Asn-281, 302–304 (SGH), and Asn-349.

This sequence belongs to the adenosylhomocysteinase family. NAD(+) serves as cofactor.

It localises to the cytoplasm. The catalysed reaction is S-adenosyl-L-homocysteine + H2O = L-homocysteine + adenosine. Its pathway is amino-acid biosynthesis; L-homocysteine biosynthesis; L-homocysteine from S-adenosyl-L-homocysteine: step 1/1. In terms of biological role, may play a key role in the regulation of the intracellular concentration of adenosylhomocysteine. The protein is Adenosylhomocysteinase of Gloeobacter violaceus (strain ATCC 29082 / PCC 7421).